We begin with the raw amino-acid sequence, 392 residues long: Mitochondrial distribution and morphology protein 10 (392 aa).

It belongs to the MDM10 family. As to quaternary structure, component of the ER-mitochondria encounter structure (ERMES) or MDM complex, composed of MMM1, MDM10, MDM12 and MDM34. Associates with the mitochondrial outer membrane sorting assembly machinery SAM(core) complex.

The protein resides in the mitochondrion outer membrane. Functionally, component of the ERMES/MDM complex, which serves as a molecular tether to connect the endoplasmic reticulum and mitochondria. Components of this complex are involved in the control of mitochondrial shape and protein biogenesis and may function in phospholipid exchange. MDM10 is involved in the late assembly steps of the general translocase of the mitochondrial outer membrane (TOM complex). Functions in the TOM40-specific route of the assembly of outer membrane beta-barrel proteins, including the association of TOM40 with the receptor TOM22 and small TOM proteins. Can associate with the SAM(core) complex as well as the MDM12-MMM1 complex, both involved in late steps of the major beta-barrel assembly pathway, that is responsible for biogenesis of all outer membrane beta-barrel proteins. May act as a switch that shuttles between both complexes and channels precursor proteins into the TOM40-specific pathway. Plays a role in mitochondrial morphology and in the inheritance of mitochondria. This chain is Mitochondrial distribution and morphology protein 10, found in Phaeosphaeria nodorum (strain SN15 / ATCC MYA-4574 / FGSC 10173) (Glume blotch fungus).